A 197-amino-acid chain; its full sequence is Imidazoleglycerol-phosphate dehydratase (197 aa).

Belongs to the imidazoleglycerol-phosphate dehydratase family.

Its subcellular location is the cytoplasm. It carries out the reaction D-erythro-1-(imidazol-4-yl)glycerol 3-phosphate = 3-(imidazol-4-yl)-2-oxopropyl phosphate + H2O. The protein operates within amino-acid biosynthesis; L-histidine biosynthesis; L-histidine from 5-phospho-alpha-D-ribose 1-diphosphate: step 6/9. This Streptomyces avermitilis (strain ATCC 31267 / DSM 46492 / JCM 5070 / NBRC 14893 / NCIMB 12804 / NRRL 8165 / MA-4680) protein is Imidazoleglycerol-phosphate dehydratase.